Consider the following 587-residue polypeptide: Chaperonin CPN60, mitochondrial (587 aa).

Residues 1–32 constitute a mitochondrion transit peptide; sequence MYRLISSIASKARVARNCTSQIGSRLSSTRNY.

It belongs to the chaperonin (HSP60) family.

The protein localises to the mitochondrion. Its function is as follows. Implicated in mitochondrial protein import and macromolecular assembly. May facilitate the correct folding of imported proteins. May also prevent misfolding and promote the refolding and proper assembly of unfolded polypeptides generated under stress conditions in the mitochondrial matrix. In Brassica napus (Rape), this protein is Chaperonin CPN60, mitochondrial.